Reading from the N-terminus, the 555-residue chain is Potassium-transporting ATPase potassium-binding subunit (555 aa).

The next 10 helical transmembrane spans lie at 2–22 (IWVAVVITMLLFILVAKPTGI), 60–80 (QYALSLVLLNGFMIVVVYFIF), 130–150 (IGITFLMFAAPATTLALVMAF), 173–193 (VFLPIAFMAALVFVALGVPQT), 246–266 (MSNILQMMLMMLLPTALPFTY), 278–298 (ILFVSLFMVFLLGFITITTSE), 374–394 (AGFVNIIMYAIIAVFISGLMV), 412–432 (LIAVTILFHPLLILGFSALAL), 483–503 (LVMFLGRYFSLITMLAVAASL), and 525–545 (GIFIGTIVIVGALTFFPMLVL).

The protein belongs to the KdpA family. As to quaternary structure, the system is composed of three essential subunits: KdpA, KdpB and KdpC.

The protein resides in the cell membrane. In terms of biological role, part of the high-affinity ATP-driven potassium transport (or Kdp) system, which catalyzes the hydrolysis of ATP coupled with the electrogenic transport of potassium into the cytoplasm. This subunit binds the extracellular potassium ions and delivers the ions to the membrane domain of KdpB through an intramembrane tunnel. This is Potassium-transporting ATPase potassium-binding subunit from Bacillus thuringiensis (strain Al Hakam).